The following is a 613-amino-acid chain: Probable LRR receptor-like serine/threonine-protein kinase At5g10290 (613 aa).

The signal sequence occupies residues 1–31; that stretch reads MRMFSLQKMAMAFTLLFFACLCSFVSPDAQG. Residues 32–225 lie on the Extracellular side of the membrane; that stretch reads DALFALRISL…SGDSSKPKTG (194 aa). Residues asparagine 81 and asparagine 116 are each glycosylated (N-linked (GlcNAc...) asparagine). LRR repeat units follow at residues 95-117, 119-141, 143-166, and 167-189; these read NLKTLTLKGNGITGEIPEDFGNL, SLTSLDLEDNQLTGRIPSTIGNL, KLQFLTLSRNKLNGTIPESLTGLP, and NLLNLLLDSNSLSGQIPQSLFEI. Asparagine 155 carries N-linked (GlcNAc...) asparagine glycosylation. A glycan (N-linked (GlcNAc...) asparagine) is linked at asparagine 193. A helical transmembrane segment spans residues 226–246; sequence IIAGVVAGVTVVLFGILLFLF. The Cytoplasmic portion of the chain corresponds to 247-613; sequence CKDRHKGYRR…QDAIELSGGR (367 aa). Threonine 287 carries the post-translational modification Phosphothreonine. A Protein kinase domain is found at 290–569; the sequence is FSEKNVLGQG…VVRMLEGEGL (280 aa). Residue 296 to 304 participates in ATP binding; that stretch reads LGQGGFGKV. Threonine 313 is subject to Phosphothreonine. Lysine 318 contributes to the ATP binding site. At serine 371 the chain carries Phosphoserine. Residue threonine 390 is modified to Phosphothreonine. Aspartate 417 functions as the Proton acceptor in the catalytic mechanism. Residues threonine 450, threonine 451, and threonine 456 each carry the phosphothreonine modification. Tyrosine 464 is subject to Phosphotyrosine. Residue serine 466 is modified to Phosphoserine. Threonine 467 carries the phosphothreonine modification. Serine 471 is subject to Phosphoserine. Threonine 547 bears the Phosphothreonine mark.

It belongs to the protein kinase superfamily. Ser/Thr protein kinase family.

The protein resides in the cell membrane. The catalysed reaction is L-seryl-[protein] + ATP = O-phospho-L-seryl-[protein] + ADP + H(+). It carries out the reaction L-threonyl-[protein] + ATP = O-phospho-L-threonyl-[protein] + ADP + H(+). The polypeptide is Probable LRR receptor-like serine/threonine-protein kinase At5g10290 (Arabidopsis thaliana (Mouse-ear cress)).